We begin with the raw amino-acid sequence, 126 residues long: 3-aminoacrylate deaminase RutC (126 aa).

This sequence belongs to the RutC family.

The catalysed reaction is (Z)-3-aminoacrylate + H2O + H(+) = 3-oxopropanoate + NH4(+). Involved in pyrimidine catabolism. Catalyzes the deamination of 3-aminoacrylate to malonic semialdehyde, a reaction that can also occur spontaneously. RutC may facilitate the reaction and modulate the metabolic fitness, rather than catalyzing essential functions. This chain is 3-aminoacrylate deaminase RutC, found in Acinetobacter baylyi (strain ATCC 33305 / BD413 / ADP1).